The sequence spans 334 residues: Thiamine thiazole synthase (334 aa).

Substrate contacts are provided by residues Cys-86, 107 to 108, Gly-115, and Val-183; that span reads EA. At Cys-221 the chain carries 2,3-didehydroalanine (Cys). Substrate-binding positions include Asp-223, His-238, Met-290, and 300–302; that span reads RMG.

It belongs to the THI4 family. In terms of assembly, homooctamer. The cofactor is Fe cation. Post-translationally, during the catalytic reaction, a sulfide is transferred from Cys-221 to a reaction intermediate, generating a dehydroalanine residue.

Its subcellular location is the cytoplasm. The protein resides in the nucleus. The enzyme catalyses [ADP-thiazole synthase]-L-cysteine + glycine + NAD(+) = [ADP-thiazole synthase]-dehydroalanine + ADP-5-ethyl-4-methylthiazole-2-carboxylate + nicotinamide + 3 H2O + 2 H(+). Functionally, involved in biosynthesis of the thiamine precursor thiazole. Catalyzes the conversion of NAD and glycine to adenosine diphosphate 5-(2-hydroxyethyl)-4-methylthiazole-2-carboxylic acid (ADT), an adenylated thiazole intermediate. The reaction includes an iron-dependent sulfide transfer from a conserved cysteine residue of the protein to a thiazole intermediate. The enzyme can only undergo a single turnover, which suggests it is a suicide enzyme. May have additional roles in adaptation to various stress conditions and in DNA damage tolerance. This is Thiamine thiazole synthase from Ajellomyces capsulatus (strain G186AR / H82 / ATCC MYA-2454 / RMSCC 2432) (Darling's disease fungus).